Reading from the N-terminus, the 1820-residue chain is Sodium channel protein (1820 aa).

The Cytoplasmic segment spans residues 1-117 (MARKFSSARP…FNPIRRGAIR (117 aa)). Residues 108 to 410 (FNPIRRGAIR…VAMAYEEQNQ (303 aa)) form an I repeat. The chain crosses the membrane as a helical span at residues 118–138 (VFVNSAFNFFIMFTIFSNCIF). The Extracellular segment spans residues 139-149 (MTISNPPAWSK). Residues 150-171 (IVEYTFTGIYTFEVIVKVLSRG) form a helical membrane-spanning segment. Residues 172 to 176 (FCIGH) lie on the Cytoplasmic side of the membrane. A helical membrane pass occupies residues 177–197 (FTFLRDPWNWLDFSVVTMTYI). The Extracellular segment spans residues 198 to 203 (TEFIDL). The chain crosses the membrane as a helical; Voltage-sensor span at residues 204–224 (RNVSALRTFRVLRALKTITIF). The Cytoplasmic segment spans residues 225 to 243 (PGLKTIVRALIESMKQMGD). The helical transmembrane segment at 244 to 264 (VVILTVFSLAVFTLAGMQLFM) threads the bilayer. The Extracellular segment spans residues 265 to 346 (GNLRHKCIRW…PNYGYTNYDN (82 aa)). Cysteine 271 and cysteine 324 are oxidised to a cystine. Asparagine 278, asparagine 288, and asparagine 317 each carry an N-linked (GlcNAc...) asparagine glycan. Residues 285-342 (SAYNTTFDFTAYIENEENQYFLDGALDALLCGNNSDAGKCPEGYTCMKAGRNPNYGYT) form a non-homologous region of repeat I region. Residues 347–371 (FAWTFLCLFRLMLQDYWENLYQMTL) constitute an intramembrane region (pore-forming). Topologically, residues 372-378 (RAAGKSY) are extracellular. A helical membrane pass occupies residues 379-402 (MVFFIMVIFLGSFYLINLILAVVA). The Cytoplasmic segment spans residues 403-557 (MAYEEQNQAT…CCGPWVFLKK (155 aa)). The interval 483 to 507 (SVKLSTEEQRSDSKSMDSKHSVDKP) is disordered. Positions 487–507 (STEEQRSDSKSMDSKHSVDKP) are enriched in basic and acidic residues. The stretch at 548 to 811 (CCGPWVFLKK…EEDDEVNSLQ (264 aa)) is one II repeat. The helical transmembrane segment at 558–578 (WVHFVMMDPFTDLFITLCIIL) threads the bilayer. Residues 579 to 599 (NTLFMSIEHHPMNESFQSLLS) lie on the Extracellular side of the membrane. The N-linked (GlcNAc...) asparagine glycan is linked to asparagine 591. Residues 600 to 620 (AGNLVFTTIFAAEMVLKIIAL) form a helical membrane-spanning segment. The Cytoplasmic portion of the chain corresponds to 621–625 (DPYYY). Residues 626-643 (FQQTWNIFDSIIVSLSLL) traverse the membrane as a helical segment. Topologically, residues 644-650 (ELGLSNM) are extracellular. A helical; Voltage-sensor membrane pass occupies residues 651-671 (QGMSVLRSLRLLRIFKLAKSW). Residues 672 to 690 (PTLNILIKIICNSVGALGN) are Cytoplasmic-facing. Residues 691–711 (LTIVLAIIVFIFALVGFQLFG) form a helical membrane-spanning segment. At 712 to 734 (KNYKEYVCKISDDCELPRWHMND) the chain is on the extracellular side. An intramembrane region (pore-forming) is located at residues 735 to 755 (FFHSFLIVFRALCGEWIETMW). The Extracellular segment spans residues 756–766 (DCMEVGGVPMC). An intrachain disulfide couples cysteine 757 to cysteine 766. A helical transmembrane segment spans residues 767 to 790 (LAVYMMVIIIGNLVMLNLFLALLL). Residues 791-1004 (SSFSSDNLSS…TIVEHDYFET (214 aa)) lie on the Cytoplasmic side of the membrane. Disordered regions lie at residues 844–864 (PPSD…DTLP) and 891–959 (VKGE…SKDP). Acidic residues predominate over residues 896–910 (EIEEEGLVDSSDEED). Residues 924 to 935 (SVCSTVDYSPSE) are compositionally biased toward polar residues. Acidic residues predominate over residues 942–953 (EEEEEEEEEPEE). Residues 988 to 1295 (NLRRTCYTIV…KKYYNAMKKL (308 aa)) form an III repeat. Residues 1005–1025 (FIIFMILLSSGVLAFEDIYIW) traverse the membrane as a helical segment. The Extracellular portion of the chain corresponds to 1026–1037 (RRRVIKVILEYA). The chain crosses the membrane as a helical span at residues 1038-1058 (DKVFTYVFIVEMLLKWVAYGF). Residues 1059 to 1065 (KRYFTDA) lie on the Cytoplasmic side of the membrane. Residues 1066–1086 (WCWLDFVIVGASIMGITSSLL) traverse the membrane as a helical segment. The Extracellular segment spans residues 1087-1091 (GYEEL). A helical; Voltage-sensor transmembrane segment spans residues 1092-1112 (GAIKNLRTIRALRPLRALSRF). Over 1113-1131 (EGMKVVVRALLGAIPSIMN) the chain is Cytoplasmic. Residues 1132 to 1152 (VLLVCLMFWLIFSIMGVNLFA) form a helical membrane-spanning segment. The Extracellular segment spans residues 1153–1199 (GKFYRCINTTTDEILPVEEVNNRSDCMALMYTNEVRWVNLKVNYDNA). Residues asparagine 1160 and asparagine 1174 are each glycosylated (N-linked (GlcNAc...) asparagine). The interval 1172-1194 (VNNRSDCMALMYTNEVRWVNLKV) is non-homologous region of repeat III. The pore-forming intramembrane region spans 1200–1221 (GMGYLSLLQVSTFKGWMDIMYA). The Extracellular portion of the chain corresponds to 1222-1243 (AVDSREVEDQPIYEINVYMYLY). A helical transmembrane segment spans residues 1244-1264 (FVIFIVFGAFFTLNLFIGVII). Residues 1265–1320 (DNFNRQKQKLGGEDLFMTEEQKKYYNAMKKLGSKKAAKCIPRPSNVVQGVVYDIVT) are Cytoplasmic-facing. Residues 1304–1602 (IPRPSNVVQG…WHKFDVHGTQ (299 aa)) form an IV repeat. A helical transmembrane segment spans residues 1321–1341 (QPFTDIFIMALICINMVAMMV). At 1342-1352 (ESEDQSQVKKD) the chain is on the extracellular side. The chain crosses the membrane as a helical span at residues 1353–1376 (ILSQINVIFVIIFTVECLLKLLAL). Over 1377–1380 (RQYF) the chain is Cytoplasmic. A helical membrane pass occupies residues 1381–1398 (FTVGWNVFDFAVVVISII). Residues 1399 to 1416 (GLLLSDIIEKYFVSPTLF) lie on the Extracellular side of the membrane. The chain crosses the membrane as a helical; Voltage-sensor span at residues 1417–1437 (RVIRLARIARVLRLIRAAKGI). The Cytoplasmic portion of the chain corresponds to 1438–1453 (RTLLFALMMSLPALFN). Residues 1454-1474 (IGLLLFLIMFIFSIFGMSNFA) traverse the membrane as a helical segment. At 1475–1490 (YVKKQGGVDDIFNFET) the chain is on the extracellular side. The interval 1490 to 1505 (TFGNSMICLFEITTSA) is non-homologous region of repeat IV. Residues 1491–1513 (FGNSMICLFEITTSAGWDGLLLP) constitute an intramembrane region (pore-forming). Topologically, residues 1514–1543 (TLNTGPPDCDPDVENPGTDVRGNCGNPGKG) are extracellular. A helical membrane pass occupies residues 1544–1567 (ITFFCSYIILSFLVVVNMYIAIIL). Topologically, residues 1568–1820 (ENFGVAQEES…GAIVVRESIV (253 aa)) are cytoplasmic.

It belongs to the sodium channel (TC 1.A.1.10) family.

It localises to the cell membrane. Its function is as follows. Mediates the voltage-dependent sodium ion permeability of excitable membranes. Assuming opened or closed conformations in response to the voltage difference across the membrane, the protein forms a sodium-selective channel through which Na(+) ions may pass in accordance with their electrochemical gradient. In Electrophorus electricus (Electric eel), this protein is Sodium channel protein.